Consider the following 288-residue polypeptide: Bifunctional protein FolD (288 aa).

NADP(+)-binding positions include 166-168 (GAS) and I232.

The protein belongs to the tetrahydrofolate dehydrogenase/cyclohydrolase family. As to quaternary structure, homodimer.

The catalysed reaction is (6R)-5,10-methylene-5,6,7,8-tetrahydrofolate + NADP(+) = (6R)-5,10-methenyltetrahydrofolate + NADPH. The enzyme catalyses (6R)-5,10-methenyltetrahydrofolate + H2O = (6R)-10-formyltetrahydrofolate + H(+). It functions in the pathway one-carbon metabolism; tetrahydrofolate interconversion. Functionally, catalyzes the oxidation of 5,10-methylenetetrahydrofolate to 5,10-methenyltetrahydrofolate and then the hydrolysis of 5,10-methenyltetrahydrofolate to 10-formyltetrahydrofolate. This chain is Bifunctional protein FolD, found in Escherichia coli (strain UTI89 / UPEC).